The primary structure comprises 449 residues: Sensor protein QseC (449 aa).

At 1–12 (MKLTQRLSLRVR) the chain is on the cytoplasmic side. The helical transmembrane segment at 13 to 33 (LTLIFLILVSITWAISSFVAW) threads the bilayer. The Periplasmic portion of the chain corresponds to 34-161 (RKTTDNVDEL…REDMALAIVA (128 aa)). The helical transmembrane segment at 162–182 (AQLTPWLIALPFMLLILLLLL) threads the bilayer. Residues 183–235 (HRELRPLKKLAQALRFRSPESETPLDAKGVPSEVRPLVEALNQLFSRIHSMMV) form the HAMP domain. Residues 183–449 (HRELRPLKKL…EGGFEAVVSW (267 aa)) are Cytoplasmic-facing. Residues 243 to 449 (DAAHELRSPL…EGGFEAVVSW (207 aa)) enclose the Histidine kinase domain. His-246 carries the post-translational modification Phosphohistidine; by autocatalysis.

It is found in the cell inner membrane. The enzyme catalyses ATP + protein L-histidine = ADP + protein N-phospho-L-histidine.. Member of a two-component regulatory system QseB/QseC. Activates the flagella regulon by activating transcription of FlhDC. May activate QseB by phosphorylation. This is Sensor protein QseC (qseC) from Salmonella typhimurium (strain LT2 / SGSC1412 / ATCC 700720).